A 390-amino-acid chain; its full sequence is Putative transposase YncI (390 aa).

The protein belongs to the transposase 11 family.

The protein is Putative transposase YncI (yncI) of Escherichia coli O157:H7.